The chain runs to 464 residues: Signal recognition particle 54 kDa protein (464 aa).

GTP contacts are provided by residues 104–111 (GLQGSGKT), 184–188 (DTAGR), and 242–245 (TKLD).

The protein belongs to the GTP-binding SRP family. SRP54 subfamily. Part of the signal recognition particle protein translocation system, which is composed of SRP and FtsY. Archaeal SRP consists of a 7S RNA molecule of 300 nucleotides and two protein subunits: SRP54 and SRP19.

Its subcellular location is the cytoplasm. It carries out the reaction GTP + H2O = GDP + phosphate + H(+). Its function is as follows. Involved in targeting and insertion of nascent membrane proteins into the cytoplasmic membrane. Binds to the hydrophobic signal sequence of the ribosome-nascent chain (RNC) as it emerges from the ribosomes. The SRP-RNC complex is then targeted to the cytoplasmic membrane where it interacts with the SRP receptor FtsY. This Halorubrum lacusprofundi (strain ATCC 49239 / DSM 5036 / JCM 8891 / ACAM 34) protein is Signal recognition particle 54 kDa protein.